A 121-amino-acid chain; its full sequence is Holo-[acyl-carrier-protein] synthase (121 aa).

2 residues coordinate Mg(2+): Asp6 and Glu55.

This sequence belongs to the P-Pant transferase superfamily. AcpS family. The cofactor is Mg(2+).

The protein resides in the cytoplasm. The enzyme catalyses apo-[ACP] + CoA = holo-[ACP] + adenosine 3',5'-bisphosphate + H(+). Functionally, transfers the 4'-phosphopantetheine moiety from coenzyme A to a Ser of acyl-carrier-protein. This Chloroherpeton thalassium (strain ATCC 35110 / GB-78) protein is Holo-[acyl-carrier-protein] synthase.